The primary structure comprises 463 residues: Cysteine--tRNA ligase (463 aa).

Residue C29 coordinates Zn(2+). A 'HIGH' region motif is present at residues P31–N41. Residues C211, H236, and E240 each coordinate Zn(2+). The 'KMSKS' region signature appears at K269 to S273. An ATP-binding site is contributed by K272.

It belongs to the class-I aminoacyl-tRNA synthetase family. As to quaternary structure, monomer. Requires Zn(2+) as cofactor.

It localises to the cytoplasm. It catalyses the reaction tRNA(Cys) + L-cysteine + ATP = L-cysteinyl-tRNA(Cys) + AMP + diphosphate. This is Cysteine--tRNA ligase from Caulobacter vibrioides (strain ATCC 19089 / CIP 103742 / CB 15) (Caulobacter crescentus).